Consider the following 354-residue polypeptide: Uroporphyrinogen decarboxylase (354 aa).

Substrate contacts are provided by residues 27 to 31, aspartate 77, tyrosine 154, threonine 209, and histidine 327; that span reads RQAGR.

Belongs to the uroporphyrinogen decarboxylase family. As to quaternary structure, homodimer.

Its subcellular location is the cytoplasm. It catalyses the reaction uroporphyrinogen III + 4 H(+) = coproporphyrinogen III + 4 CO2. It participates in porphyrin-containing compound metabolism; protoporphyrin-IX biosynthesis; coproporphyrinogen-III from 5-aminolevulinate: step 4/4. Functionally, catalyzes the decarboxylation of four acetate groups of uroporphyrinogen-III to yield coproporphyrinogen-III. The chain is Uroporphyrinogen decarboxylase from Escherichia coli O7:K1 (strain IAI39 / ExPEC).